Consider the following 335-residue polypeptide: Protein-glutamate methylesterase/protein-glutamine glutaminase 3 (335 aa).

The region spanning 2 to 119 (RIGIVNDMPL…GNPQTAAAPL (118 aa)) is the Response regulatory domain. 4-aspartylphosphate is present on Asp-53. Positions 144–335 (PKAGGARQRL…IAPRLAEVFD (192 aa)) constitute a CheB-type methylesterase domain. Residues Ser-159, His-186, and Asp-279 contribute to the active site.

The protein belongs to the CheB family. Post-translationally, phosphorylated by CheA. Phosphorylation of the N-terminal regulatory domain activates the methylesterase activity.

It localises to the cytoplasm. It catalyses the reaction [protein]-L-glutamate 5-O-methyl ester + H2O = L-glutamyl-[protein] + methanol + H(+). The catalysed reaction is L-glutaminyl-[protein] + H2O = L-glutamyl-[protein] + NH4(+). Involved in chemotaxis. Part of a chemotaxis signal transduction system that modulates chemotaxis in response to various stimuli. Catalyzes the demethylation of specific methylglutamate residues introduced into the chemoreceptors (methyl-accepting chemotaxis proteins or MCP) by CheR. Also mediates the irreversible deamidation of specific glutamine residues to glutamic acid. The protein is Protein-glutamate methylesterase/protein-glutamine glutaminase 3 of Pseudomonas aeruginosa (strain ATCC 15692 / DSM 22644 / CIP 104116 / JCM 14847 / LMG 12228 / 1C / PRS 101 / PAO1).